The primary structure comprises 236 residues: MTVNALLLSSSRVGDTPYLSHAIPFIKPLTTNAQKWIFIPYAGVSMSYDTYLASVVAGLSELRLDISGIHQHPDPRQAIKDADGILIGGGNTFHLLHELYKYDLVHLIREEVMNGKPYIGWSAGSNVSGLSIRTTNDMPIIEPPSFTALNIVPFQLNPHYSNYRAPGHNGETRAQRLLEFTRVDPITPVVGIVEGSALWRQGETLSLLGDNPAYLFCGEQQEIPIPVGSDLSHLLK.

Residues Ser122, Asp137, and His159 each act as charge relay system in the active site.

The protein belongs to the peptidase S51 family.

Its subcellular location is the cytoplasm. The enzyme catalyses Dipeptidase E catalyzes the hydrolysis of dipeptides Asp-|-Xaa. It does not act on peptides with N-terminal Glu, Asn or Gln, nor does it cleave isoaspartyl peptides.. Its function is as follows. Hydrolyzes dipeptides containing N-terminal aspartate residues. May play a role in allowing the cell to use peptide aspartate to spare carbon otherwise required for the synthesis of the aspartate family of amino acids. This Shewanella sp. (strain MR-4) protein is Peptidase E.